We begin with the raw amino-acid sequence, 560 residues long: 2-isopropylmalate synthase (560 aa).

The Pyruvate carboxyltransferase domain maps to 30–303; the sequence is PVWCSVDLRD…DPEIDCSNIE (274 aa). Asp39, His242, His244, and Asn278 together coordinate Mg(2+). Residues 437–560 are regulatory domain; it reads QPEGRLRFVD…RVLDVKAGKA (124 aa).

The protein belongs to the alpha-IPM synthase/homocitrate synthase family. LeuA type 2 subfamily. Homodimer. It depends on Mg(2+) as a cofactor.

The protein resides in the cytoplasm. The enzyme catalyses 3-methyl-2-oxobutanoate + acetyl-CoA + H2O = (2S)-2-isopropylmalate + CoA + H(+). It functions in the pathway amino-acid biosynthesis; L-leucine biosynthesis; L-leucine from 3-methyl-2-oxobutanoate: step 1/4. Functionally, catalyzes the condensation of the acetyl group of acetyl-CoA with 3-methyl-2-oxobutanoate (2-ketoisovalerate) to form 3-carboxy-3-hydroxy-4-methylpentanoate (2-isopropylmalate). The protein is 2-isopropylmalate synthase of Rhizobium johnstonii (strain DSM 114642 / LMG 32736 / 3841) (Rhizobium leguminosarum bv. viciae).